The chain runs to 301 residues: Isonocardicin synthase (301 aa).

As to quaternary structure, monomer.

It catalyses the reaction nocardicin G + S-adenosyl-L-methionine = isonocardicin C + S-methyl-5'-thioadenosine + H(+). It carries out the reaction nocardicin E + S-adenosyl-L-methionine = isonocardicin A + S-methyl-5'-thioadenosine + H(+). It functions in the pathway antibiotic biosynthesis. In terms of biological role, involved in the biosynthesis of the beta-lactam antibiotic nocardicin A. In the presence of S-adenosyl-L-methionine (AdoMet), catalyzes the transfer of a 3-amino-3-carboxypropyl group from AdoMet to nocardicin G, forming isonocardicin C. Can also catalyze the transformation of nocardicin E and F to isonocardicin A and B, respectively, but in vivo substrate is probably nocardicin G. The polypeptide is Isonocardicin synthase (Nocardia uniformis subsp. tsuyamanensis).